A 115-amino-acid chain; its full sequence is Phosphoribosyl-AMP cyclohydrolase (115 aa).

Mg(2+) is bound at residue Asp-80. Residue Cys-81 participates in Zn(2+) binding. Asp-82 and Asp-84 together coordinate Mg(2+). Residues Cys-97 and Cys-104 each contribute to the Zn(2+) site.

The protein belongs to the PRA-CH family. Homodimer. It depends on Mg(2+) as a cofactor. Requires Zn(2+) as cofactor.

The protein localises to the cytoplasm. The enzyme catalyses 1-(5-phospho-beta-D-ribosyl)-5'-AMP + H2O = 1-(5-phospho-beta-D-ribosyl)-5-[(5-phospho-beta-D-ribosylamino)methylideneamino]imidazole-4-carboxamide. The protein operates within amino-acid biosynthesis; L-histidine biosynthesis; L-histidine from 5-phospho-alpha-D-ribose 1-diphosphate: step 3/9. Catalyzes the hydrolysis of the adenine ring of phosphoribosyl-AMP. This Mycolicibacterium gilvum (strain PYR-GCK) (Mycobacterium gilvum (strain PYR-GCK)) protein is Phosphoribosyl-AMP cyclohydrolase.